An 878-amino-acid polypeptide reads, in one-letter code: Calcium-transporting ATPase 1 (878 aa).

4 consecutive transmembrane segments (helical) span residues 50-72 (LFIDTLKDPMVIILLLVAFVQLF), 76-95 (FVESLVIFIVLMINSVVAVV), 243-263 (LGWVILALCALIFAVQILRLF), and 281-301 (FAVAVAVAAIPEALSSVVTIV). Val287, Ala288, Ile290, and Glu292 together coordinate Ca(2+). The active-site 4-aspartylphosphate intermediate is the Asp334. 6 helical membrane-spanning segments follow: residues 681-701 (LFSGNLGAIIAIVFALVVGWV), 704-724 (FTALQLLFINLVNDSVPAIAL), 753-773 (VILIRGSLIGIAAIISQYVGQ), 779-799 (MGVAMAFTTLILARTLQTFAA), 816-836 (YVLMAVTFCLALYSLTTLPFL), and 845-865 (AFGWSQWIVAAGLAVIAVICM). Residues Asn713 and Asp717 each coordinate Ca(2+).

Belongs to the cation transport ATPase (P-type) (TC 3.A.3) family. Type IIA subfamily.

The protein localises to the cell membrane. It catalyses the reaction Ca(2+)(in) + ATP + H2O = Ca(2+)(out) + ADP + phosphate + H(+). Inhibited by very high concentrations of cyclopiazonic acid (CPA). Catalyzes the hydrolysis of ATP coupled with the transport of calcium. In Lactococcus lactis subsp. lactis (strain IL1403) (Streptococcus lactis), this protein is Calcium-transporting ATPase 1 (yoaB).